The sequence spans 45 residues: DNA-directed RNA polymerase subunit Rpo12 (45 aa).

Zn(2+) is bound by residues Cys-8, Cys-23, and Cys-26.

This sequence belongs to the archaeal Rpo12/eukaryotic RPC10 RNA polymerase subunit family. Part of the RNA polymerase complex. Requires Zn(2+) as cofactor.

Its subcellular location is the cytoplasm. It carries out the reaction RNA(n) + a ribonucleoside 5'-triphosphate = RNA(n+1) + diphosphate. Its function is as follows. DNA-dependent RNA polymerase (RNAP) catalyzes the transcription of DNA into RNA using the four ribonucleoside triphosphates as substrates. The protein is DNA-directed RNA polymerase subunit Rpo12 of Methanothrix thermoacetophila (strain DSM 6194 / JCM 14653 / NBRC 101360 / PT) (Methanosaeta thermophila).